A 135-amino-acid polypeptide reads, in one-letter code: Small ribosomal subunit protein uS12 (135 aa).

The segment at Met1–Lys20 is disordered. A compositionally biased stretch (basic residues) spans Arg9–Lys18.

The protein belongs to the universal ribosomal protein uS12 family. Part of the 30S ribosomal subunit. Contacts proteins S8 and S17. May interact with IF1 in the 30S initiation complex.

Functionally, with S4 and S5 plays an important role in translational accuracy. Its function is as follows. Interacts with and stabilizes bases of the 16S rRNA that are involved in tRNA selection in the A site and with the mRNA backbone. Located at the interface of the 30S and 50S subunits, it traverses the body of the 30S subunit contacting proteins on the other side and probably holding the rRNA structure together. The combined cluster of proteins S8, S12 and S17 appears to hold together the shoulder and platform of the 30S subunit. The chain is Small ribosomal subunit protein uS12 from Lactobacillus acidophilus (strain ATCC 700396 / NCK56 / N2 / NCFM).